The chain runs to 142 residues: Hemoglobin subunit alpha-2 (142 aa).

Ser-1 bears the N-acetylserine mark. Positions 1–142 (SLSTKDKETV…LSRALSEKYR (142 aa)) constitute a Globin domain. Residue His-59 coordinates O2. A heme b-binding site is contributed by His-88.

Belongs to the globin family. Hb2 is a heterotetramer of two alpha-2 chains and two beta chains. As to expression, red blood cells.

Involved in oxygen transport from gills to the various peripheral tissues. This Trematomus newnesi (Dusky notothen) protein is Hemoglobin subunit alpha-2 (hba2).